The sequence spans 446 residues: Adenylosuccinate synthetase (446 aa).

GTP-binding positions include G12–K18 and G40–T42. D13 acts as the Proton acceptor in catalysis. Positions 13 and 40 each coordinate Mg(2+). IMP is bound by residues D13 to K16, N38 to H41, T128, R142, Q223, T238, and R302. H41 acts as the Proton donor in catalysis. T298–R304 contributes to the substrate binding site. GTP-binding positions include R304, K330 to D332, and S412 to G414.

Belongs to the adenylosuccinate synthetase family. In terms of assembly, homodimer. Requires Mg(2+) as cofactor.

Its subcellular location is the cytoplasm. The catalysed reaction is IMP + L-aspartate + GTP = N(6)-(1,2-dicarboxyethyl)-AMP + GDP + phosphate + 2 H(+). It participates in purine metabolism; AMP biosynthesis via de novo pathway; AMP from IMP: step 1/2. Functionally, plays an important role in the de novo pathway of purine nucleotide biosynthesis. Catalyzes the first committed step in the biosynthesis of AMP from IMP. In Crocosphaera subtropica (strain ATCC 51142 / BH68) (Cyanothece sp. (strain ATCC 51142)), this protein is Adenylosuccinate synthetase.